The chain runs to 428 residues: C4-dicarboxylate transport protein (428 aa).

The next 8 helical transmembrane spans lie at Ser-8–Pro-28, Leu-44–Met-64, Val-76–Val-96, Ile-142–Phe-162, Val-184–Met-204, Leu-222–Ala-242, Ile-326–Val-346, and Ile-352–Ile-372.

Belongs to the dicarboxylate/amino acid:cation symporter (DAACS) (TC 2.A.23) family.

The protein localises to the cell inner membrane. Its function is as follows. Responsible for the transport of dicarboxylates such as succinate, fumarate, and malate from the periplasm across the membrane. In Shigella dysenteriae serotype 1 (strain Sd197), this protein is C4-dicarboxylate transport protein.